Reading from the N-terminus, the 334-residue chain is Holliday junction branch migration complex subunit RuvB (334 aa).

The tract at residues 4–184 (ADRLISAGVI…FGIVQRLEFY (181 aa)) is large ATPase domain (RuvB-L). ATP contacts are provided by residues Ile23, Arg24, Gly65, Lys68, Thr69, Thr70, 131-133 (EDY), Arg174, Tyr184, and Arg221. Thr69 lines the Mg(2+) pocket. Residues 185–255 (QVADLEHIVS…VAMKALDMLN (71 aa)) are small ATPAse domain (RuvB-S). The head domain (RuvB-H) stretch occupies residues 258–334 (AEGFDFMDRK…YKHFGITREE (77 aa)). Positions 294, 313, and 318 each coordinate DNA.

This sequence belongs to the RuvB family. Homohexamer. Forms an RuvA(8)-RuvB(12)-Holliday junction (HJ) complex. HJ DNA is sandwiched between 2 RuvA tetramers; dsDNA enters through RuvA and exits via RuvB. An RuvB hexamer assembles on each DNA strand where it exits the tetramer. Each RuvB hexamer is contacted by two RuvA subunits (via domain III) on 2 adjacent RuvB subunits; this complex drives branch migration. In the full resolvosome a probable DNA-RuvA(4)-RuvB(12)-RuvC(2) complex forms which resolves the HJ.

It localises to the cytoplasm. The enzyme catalyses ATP + H2O = ADP + phosphate + H(+). Its function is as follows. The RuvA-RuvB-RuvC complex processes Holliday junction (HJ) DNA during genetic recombination and DNA repair, while the RuvA-RuvB complex plays an important role in the rescue of blocked DNA replication forks via replication fork reversal (RFR). RuvA specifically binds to HJ cruciform DNA, conferring on it an open structure. The RuvB hexamer acts as an ATP-dependent pump, pulling dsDNA into and through the RuvAB complex. RuvB forms 2 homohexamers on either side of HJ DNA bound by 1 or 2 RuvA tetramers; 4 subunits per hexamer contact DNA at a time. Coordinated motions by a converter formed by DNA-disengaged RuvB subunits stimulates ATP hydrolysis and nucleotide exchange. Immobilization of the converter enables RuvB to convert the ATP-contained energy into a lever motion, pulling 2 nucleotides of DNA out of the RuvA tetramer per ATP hydrolyzed, thus driving DNA branch migration. The RuvB motors rotate together with the DNA substrate, which together with the progressing nucleotide cycle form the mechanistic basis for DNA recombination by continuous HJ branch migration. Branch migration allows RuvC to scan DNA until it finds its consensus sequence, where it cleaves and resolves cruciform DNA. The sequence is that of Holliday junction branch migration complex subunit RuvB from Yersinia enterocolitica serotype O:8 / biotype 1B (strain NCTC 13174 / 8081).